We begin with the raw amino-acid sequence, 232 residues long: MDAVAAEPVVAPVLPLPAQVRDLGMQDYVPVWRAMQRFTDTRDEHTGDELWVVEHAPVFTLGQAGKPEHVLAPGEIPVLQVDRGGQVTYHGPGQLVVYPLLDLRRLRIGVRDYVCKIEQALIDTLGEWNIIAERRDGAPGVYVGGAKIAALGIRVRRGCTFHGLSFNVAMDLEPFHRINPCGYQGLQVTSVLDLGGPSGMDAVKAVLLDQLARQFGLVLQPTSALPDLSLPA.

The 176-residue stretch at 44 to 219 folds into the BPL/LPL catalytic domain; it reads EHTGDELWVV…QLARQFGLVL (176 aa). Substrate contacts are provided by residues 83–90, 150–152, and 163–165; these read RGGQVTYH, ALG, and GLS. Cys-181 acts as the Acyl-thioester intermediate in catalysis.

This sequence belongs to the LipB family.

It is found in the cytoplasm. It carries out the reaction octanoyl-[ACP] + L-lysyl-[protein] = N(6)-octanoyl-L-lysyl-[protein] + holo-[ACP] + H(+). The protein operates within protein modification; protein lipoylation via endogenous pathway; protein N(6)-(lipoyl)lysine from octanoyl-[acyl-carrier-protein]: step 1/2. Catalyzes the transfer of endogenously produced octanoic acid from octanoyl-acyl-carrier-protein onto the lipoyl domains of lipoate-dependent enzymes. Lipoyl-ACP can also act as a substrate although octanoyl-ACP is likely to be the physiological substrate. The protein is Octanoyltransferase of Xanthomonas campestris pv. campestris (strain B100).